The sequence spans 97 residues: MSERLSEETRGPLLGPLFANGWAMVDGRDAIAKTFAFDNFVEAMGWMMRVAIWAEKWNHHPEWSNVYGKVAVVLTTHDVDGLSALDAKLARKMDSLC.

Belongs to the pterin-4-alpha-carbinolamine dehydratase family.

The catalysed reaction is (4aS,6R)-4a-hydroxy-L-erythro-5,6,7,8-tetrahydrobiopterin = (6R)-L-erythro-6,7-dihydrobiopterin + H2O. This Ruegeria pomeroyi (strain ATCC 700808 / DSM 15171 / DSS-3) (Silicibacter pomeroyi) protein is Putative pterin-4-alpha-carbinolamine dehydratase.